We begin with the raw amino-acid sequence, 339 residues long: uncharacterized protein (339 aa).

Residues 1–12 (MDIDLNNQTDNN) show a composition bias toward polar residues. Residues 1–30 (MDIDLNNQTDNNELIVEDTENPKNPNSTNI) form a disordered region.

This is an uncharacterized protein from Acanthamoeba polyphaga (Amoeba).